Here is a 313-residue protein sequence, read N- to C-terminus: Hydroxyacylglutathione hydrolase, mitochondrial (313 aa).

Positions 107, 109, 111, 112, 163, and 187 each coordinate Zn(2+). Residues K196–F198 and H226–Y228 contribute to the substrate site. H226 serves as a coordination point for Zn(2+). Basic and acidic residues-rich tracts occupy residues V285–P294 and I301–D313. The interval V285–D313 is disordered. Residue R302 to K305 coordinates substrate.

This sequence belongs to the metallo-beta-lactamase superfamily. Glyoxalase II family. Monomer. It depends on Zn(2+) as a cofactor.

The protein resides in the mitochondrion matrix. It is found in the cytoplasm. The enzyme catalyses an S-(2-hydroxyacyl)glutathione + H2O = a 2-hydroxy carboxylate + glutathione + H(+). It catalyses the reaction (R)-S-lactoylglutathione + H2O = (R)-lactate + glutathione + H(+). In terms of biological role, thiolesterase that catalyzes the hydrolysis of S-D-lactoyl-glutathione to form glutathione and D-lactic acid. In Xenopus tropicalis (Western clawed frog), this protein is Hydroxyacylglutathione hydrolase, mitochondrial (hagh).